Consider the following 276-residue polypeptide: uncharacterized protein (276 aa).

Tyrosine 47 functions as the Proton donor in the catalytic mechanism. Histidine 110 lines the substrate pocket.

Belongs to the aldo/keto reductase family.

Its subcellular location is the cytoplasm. The protein localises to the nucleus. This is an uncharacterized protein from Schizosaccharomyces pombe (strain 972 / ATCC 24843) (Fission yeast).